A 163-amino-acid chain; its full sequence is MDALEEESFALSFSSASDAEFDAVVGCLEDIIMDAEFQLLQRSFMDKYYQEFEDTEENKLTYTPIFNEYISLVEKYIEEQLLERIPGFNMAAFTTTLQHHKDEVAGDIFDMLLTFTDFLAFKEMFLDYRAEKEGRGLDLSSGLVVTSLCKSSSTPASQNNLRH.

This sequence belongs to the ARL2BP family. Interacts with GTP bound ARL2 and ARL3; the complex ARL2-ARL2BP as well as ARL2BP alone, binds to SLC25A4/ANT1. Interaction with ARL2 may be required for cilia basal body localization. Interacts with STAT3; interaction is enhanced with ARL2. Found in a complex with ARL2BP, ARL2 and SLC25A6. Found in a complex with ARL2, ARL2BP and SLC25A4. Interacts with STAT2, STAT3 and STAT4. In terms of tissue distribution, ubiquitous with higher expression in brain, especially in hippocampus and cortex. Also expressed in lung, cerebellum, liver, kidney, spleen and heart (at protein level).

The protein localises to the cytoplasm. Its subcellular location is the mitochondrion intermembrane space. It localises to the cytoskeleton. It is found in the microtubule organizing center. The protein resides in the centrosome. The protein localises to the nucleus. Its subcellular location is the spindle. It localises to the cilium basal body. In terms of biological role, together with ARL2, plays a role in the nuclear translocation, retention and transcriptional activity of STAT3. May play a role as an effector of ARL2. The chain is ADP-ribosylation factor-like protein 2-binding protein (Arl2bp) from Rattus norvegicus (Rat).